A 423-amino-acid polypeptide reads, in one-letter code: UPF0229 protein PSPA7_0730 (423 aa).

The tract at residues 84–107 (AGEHIARPSGGGGGRGGGKASNSG) is disordered. Residues 92–102 (SGGGGGRGGGK) are compositionally biased toward gly residues.

It belongs to the UPF0229 family.

In Pseudomonas paraeruginosa (strain DSM 24068 / PA7) (Pseudomonas aeruginosa (strain PA7)), this protein is UPF0229 protein PSPA7_0730.